Consider the following 1531-residue polypeptide: DNA topoisomerase 2-alpha (1531 aa).

Met1 is subject to N-acetylmethionine. Phosphoserine is present on Ser4. Residue Lys17 forms a Glycyl lysine isopeptide (Lys-Gly) (interchain with G-Cter in SUMO2) linkage. ATP is bound by residues Asn91, Asn120, and 148 to 150 (SSN). Residues Lys156 and Lys157 each participate in a glycyl lysine isopeptide (Lys-Gly) (interchain with G-Cter in SUMO2) cross-link. 161–168 (GRNGYGAK) serves as a coordination point for ATP. Lys261 participates in a covalent cross-link: Glycyl lysine isopeptide (Lys-Gly) (interchain with G-Cter in SUMO2). Residue Thr282 is modified to Phosphothreonine. An interaction with DNA region spans residues 342-344 (KKK). Residue Lys352 forms a Glycyl lysine isopeptide (Lys-Gly) (interchain with G-Cter in SUMO2) linkage. 376–378 (QTK) is a binding site for ATP. Glycyl lysine isopeptide (Lys-Gly) (interchain with G-Cter in SUMO2) cross-links involve residues Lys386, Lys397, Lys416, Lys418, Lys425, and Lys440. The Toprim domain maps to 455 to 572 (CTLILTEGDS…SLLRHRFLEE (118 aa)). Glu461 lines the Mg(2+) pocket. Glycyl lysine isopeptide (Lys-Gly) (interchain with G-Cter in SUMO2) cross-links involve residues Lys466, Lys480, and Lys529. Positions 541 and 543 each coordinate Mg(2+). Glycyl lysine isopeptide (Lys-Gly) (interchain with G-Cter in SUMO2) cross-links involve residues Lys584, Lys599, Lys614, Lys622, Lys625, Lys632, Lys639, Lys655, Lys662, and Lys676. The 457-residue stretch at 715–1171 (IPSMVDGLKP…SPSDLWKEDL (457 aa)) folds into the Topo IIA-type catalytic domain. Tyr805 functions as the O-(5'-phospho-DNA)-tyrosine intermediate in the catalytic mechanism. Residues 990-999 (KLQTSLTCNS) form an interaction with DNA region. The Nuclear export signal motif lies at 1018-1028 (ILRDFFELRLK). A Glycyl lysine isopeptide (Lys-Gly) (interchain with G-Cter in SUMO2) cross-link involves residue Lys1075. Disordered regions lie at residues 1090-1123 (WKEAQQKVPDEEENEESDNEKETEKSDSVTDSGP) and 1184-1531 (KEKQ…DDLF). A compositionally biased stretch (acidic residues) spans 1099-1108 (DEEENEESDN). Phosphoserine; by CK1 is present on Ser1106. Glycyl lysine isopeptide (Lys-Gly) (interchain with G-Cter in SUMO2) cross-links involve residues Lys1114, Lys1196, and Lys1204. Thr1205 carries the phosphothreonine modification. Residue Ser1213 is modified to Phosphoserine. Residue Lys1228 forms a Glycyl lysine isopeptide (Lys-Gly) (interchain with G-Cter in SUMO2) linkage. A Glycyl lysine isopeptide (Lys-Gly) (interchain with G-Cter in SUMO1); alternate cross-link involves residue Lys1240. Lys1240 participates in a covalent cross-link: Glycyl lysine isopeptide (Lys-Gly) (interchain with G-Cter in SUMO2); alternate. Thr1244 carries the post-translational modification Phosphothreonine. A Phosphoserine modification is found at Ser1247. Basic and acidic residues predominate over residues 1256-1272 (EGLKQRLEKKQKREPGT). Glycyl lysine isopeptide (Lys-Gly) (interchain with G-Cter in SUMO2) cross-links involve residues Lys1259, Lys1276, Lys1283, and Lys1286. Ser1295, Ser1297, Ser1299, and Ser1302 each carry phosphoserine. Residue Thr1327 is modified to Phosphothreonine. Positions 1330-1349 (LDSDEDFSDFDEKTDDEDFV) are enriched in acidic residues. A phosphoserine mark is found at Ser1332 and Ser1337. Residue Thr1343 is modified to Phosphothreonine; by PLK3. A phosphoserine mark is found at Ser1351 and Ser1354. Residues Lys1363, Lys1367, and Lys1373 each participate in a glycyl lysine isopeptide (Lys-Gly) (interchain with G-Cter in SUMO2) cross-link. Phosphoserine occurs at positions 1374 and 1377. Residue Lys1385 forms a Glycyl lysine isopeptide (Lys-Gly) (interchain with G-Cter in SUMO2) linkage. Residues Ser1387, Ser1391, Ser1392, and Ser1393 each carry the phosphoserine modification. Low complexity predominate over residues 1406–1431 (TNPVPKKNVTVKKTAAKSQSSTSTTG). Lys1422 is covalently cross-linked (Glycyl lysine isopeptide (Lys-Gly) (interchain with G-Cter in SUMO2); alternate). The residue at position 1422 (Lys1422) is an N6-acetyllysine; alternate. The interval 1433–1439 (KKRAAPK) is interaction with PLSCR1. A Glycyl lysine isopeptide (Lys-Gly) (interchain with G-Cter in SUMO2); alternate cross-link involves residue Lys1442. Residue Lys1442 is modified to N6-acetyllysine; alternate. Position 1449 is a phosphoserine (Ser1449). Residues Lys1454 and Lys1459 each participate in a glycyl lysine isopeptide (Lys-Gly) (interchain with G-Cter in SUMO2) cross-link. A Phosphoserine; by CK2 modification is found at Ser1469. Phosphothreonine is present on Thr1470. Ser1471, Ser1474, and Ser1476 each carry phosphoserine. Glycyl lysine isopeptide (Lys-Gly) (interchain with G-Cter in SUMO2) cross-links involve residues Lys1484 and Lys1492. The segment covering 1491–1502 (SKGESDDFHMDF) has biased composition (basic and acidic residues). 3 positions are modified to phosphoserine: Ser1495, Ser1504, and Ser1525.

Belongs to the type II topoisomerase family. As to quaternary structure, homodimer. Interacts with COPS5. Interacts with RECQL5; this stimulates DNA decatenation. Interacts with SETMAR; stimulates the topoisomerase activity. Interacts with DHX9; this interaction occurs in a E2 enzyme UBE2I- and RNA-dependent manner, negatively regulates DHX9-mediated double-stranded DNA and RNA duplex helicase activity and stimulates TOP2A-mediated supercoiled DNA relaxation activity. Interacts with HNRNPU (via C-terminus); this interaction protects the topoisomerase TOP2A from degradation and positively regulates the relaxation of supercoiled DNA in a RNA-dependent manner. Interacts with MCM3AP isoform GANP. Interacts with ERCC6. Interacts with PLSCR1. Interacts with GCNA; this interaction allows the resolution of topoisomerase II (TOP2A) DNA-protein cross-links. Interacts with POL1RA/RPA1 (via dock II) and UBTF in the context of Pol I complex; may assist Pol I transcription initiation by releasing supercoils occurring during DNA unwinding. Interacts with TPRN; TPRN interacts with a number of DNA damage response proteins, is recruited to sites of DNA damage and may play a role in DNA damage repair. The cofactor is Mg(2+). Mn(2+) serves as cofactor. Ca(2+) is required as a cofactor. In terms of processing, phosphorylation has no effect on catalytic activity. However, phosphorylation at Ser-1106 by CSNK1D/CK1 promotes DNA cleavable complex formation. (Microbial infection) Deubiquitinated by Epstein-Barr virus BPLF1; leading to stabilized SUMOylated TOP2A trapped in cleavage complexes, which halts the DNA damage response to TOP2A-induced double-strand DNA breaks. Post-translationally, SUMOylated. Expressed in the tonsil, spleen, lymph node, thymus, skin, pancreas, testis, colon, kidney, liver, brain and lung. Also found in high-grade lymphomas, squamous cell lung tumors and seminomas.

It localises to the cytoplasm. The protein resides in the nucleus. Its subcellular location is the nucleoplasm. The protein localises to the nucleolus. The enzyme catalyses ATP-dependent breakage, passage and rejoining of double-stranded DNA.. Its activity is regulated as follows. Specifically inhibited by the intercalating agent amsacrine. In terms of biological role, key decatenating enzyme that alters DNA topology by binding to two double-stranded DNA molecules, generating a double-stranded break in one of the strands, passing the intact strand through the broken strand, and religating the broken strand. May play a role in regulating the period length of BMAL1 transcriptional oscillation. This is DNA topoisomerase 2-alpha (TOP2A) from Homo sapiens (Human).